A 146-amino-acid chain; its full sequence is Nucleoside diphosphate kinase (146 aa).

Lys-11, Phe-59, Arg-87, Thr-93, Arg-104, and Asn-114 together coordinate ATP. The active-site Pros-phosphohistidine intermediate is His-117.

It belongs to the NDK family. Homotetramer. It depends on Mg(2+) as a cofactor.

It is found in the cytoplasm. It catalyses the reaction a 2'-deoxyribonucleoside 5'-diphosphate + ATP = a 2'-deoxyribonucleoside 5'-triphosphate + ADP. The enzyme catalyses a ribonucleoside 5'-diphosphate + ATP = a ribonucleoside 5'-triphosphate + ADP. Major role in the synthesis of nucleoside triphosphates other than ATP. The ATP gamma phosphate is transferred to the NDP beta phosphate via a ping-pong mechanism, using a phosphorylated active-site intermediate. This chain is Nucleoside diphosphate kinase, found in Anaeromyxobacter sp. (strain Fw109-5).